We begin with the raw amino-acid sequence, 864 residues long: Protein translocase subunit SecA (864 aa).

ATP-binding positions include Gln-85, 103–107, and Asp-542; that span reads GEGKT.

Belongs to the SecA family. In terms of assembly, monomer and homodimer. Part of the essential Sec protein translocation apparatus which comprises SecA, SecYEG and auxiliary proteins SecDF. Other proteins may also be involved.

The protein localises to the cell inner membrane. Its subcellular location is the cytoplasm. The enzyme catalyses ATP + H2O + cellular proteinSide 1 = ADP + phosphate + cellular proteinSide 2.. Functionally, part of the Sec protein translocase complex. Interacts with the SecYEG preprotein conducting channel. Has a central role in coupling the hydrolysis of ATP to the transfer of proteins into and across the cell membrane, serving as an ATP-driven molecular motor driving the stepwise translocation of polypeptide chains across the membrane. The sequence is that of Protein translocase subunit SecA from Fervidobacterium nodosum (strain ATCC 35602 / DSM 5306 / Rt17-B1).